Here is a 645-residue protein sequence, read N- to C-terminus: Threonine--tRNA ligase (645 aa).

A TGS domain is found at 1 to 63 (MNQINIQFPD…EQDGAIEIIT (63 aa)). Residues 242 to 540 (DHRKIGKDLE…LTEETKGAFP (299 aa)) form a catalytic region. Residues Cys336, His387, and His517 each contribute to the Zn(2+) site.

This sequence belongs to the class-II aminoacyl-tRNA synthetase family. As to quaternary structure, homodimer. The cofactor is Zn(2+).

It is found in the cytoplasm. The enzyme catalyses tRNA(Thr) + L-threonine + ATP = L-threonyl-tRNA(Thr) + AMP + diphosphate + H(+). Functionally, catalyzes the attachment of threonine to tRNA(Thr) in a two-step reaction: L-threonine is first activated by ATP to form Thr-AMP and then transferred to the acceptor end of tRNA(Thr). Also edits incorrectly charged L-seryl-tRNA(Thr). The sequence is that of Threonine--tRNA ligase from Staphylococcus epidermidis (strain ATCC 35984 / DSM 28319 / BCRC 17069 / CCUG 31568 / BM 3577 / RP62A).